We begin with the raw amino-acid sequence, 152 residues long: Ribosome maturation factor RimP (152 aa).

It belongs to the RimP family.

It localises to the cytoplasm. Its function is as follows. Required for maturation of 30S ribosomal subunits. The protein is Ribosome maturation factor RimP of Ectopseudomonas mendocina (strain ymp) (Pseudomonas mendocina).